Consider the following 121-residue polypeptide: MIFGIGIDIVELHRIENMLSRQARFPQRILTEAEYARFTLLSDKRKIEFLAGRFAAKEAFSKAYGTGIGKELSFQDIETGNDKAGKPVLACAKLDCATVHVSITHTKEYAAAQVVIERLSR.

Positions 8 and 58 each coordinate Mg(2+).

It belongs to the P-Pant transferase superfamily. AcpS family. Mg(2+) serves as cofactor.

The protein localises to the cytoplasm. The catalysed reaction is apo-[ACP] + CoA = holo-[ACP] + adenosine 3',5'-bisphosphate + H(+). In terms of biological role, transfers the 4'-phosphopantetheine moiety from coenzyme A to a Ser of acyl-carrier-protein. This chain is Holo-[acyl-carrier-protein] synthase, found in Bacillus velezensis (strain DSM 23117 / BGSC 10A6 / LMG 26770 / FZB42) (Bacillus amyloliquefaciens subsp. plantarum).